A 346-amino-acid polypeptide reads, in one-letter code: NADH-ubiquinone oxidoreductase chain 2 (346 aa).

Helical transmembrane passes span 25–45 (HWIL…PLIS), 52–72 (AIEA…LILF), 95–115 (CLIL…HFWF), 124–144 (LITA…LLLM), 149–169 (LNPA…GWMG), 178–196 (ILAF…IIIY), 200–219 (LTIL…FLSL), 247–267 (TLLS…WLII), 274–294 (EMTP…FFYL), and 326–346 (AILT…TTLV).

The protein belongs to the complex I subunit 2 family.

The protein resides in the mitochondrion inner membrane. It catalyses the reaction a ubiquinone + NADH + 5 H(+)(in) = a ubiquinol + NAD(+) + 4 H(+)(out). Its function is as follows. Core subunit of the mitochondrial membrane respiratory chain NADH dehydrogenase (Complex I) that is believed to belong to the minimal assembly required for catalysis. Complex I functions in the transfer of electrons from NADH to the respiratory chain. The immediate electron acceptor for the enzyme is believed to be ubiquinone. This is NADH-ubiquinone oxidoreductase chain 2 (MT-ND2) from Coturnix japonica (Japanese quail).